The primary structure comprises 128 residues: Ribonuclease P protein component (128 aa).

This sequence belongs to the RnpA family. As to quaternary structure, consists of a catalytic RNA component (M1 or rnpB) and a protein subunit.

It carries out the reaction Endonucleolytic cleavage of RNA, removing 5'-extranucleotides from tRNA precursor.. RNaseP catalyzes the removal of the 5'-leader sequence from pre-tRNA to produce the mature 5'-terminus. It can also cleave other RNA substrates such as 4.5S RNA. The protein component plays an auxiliary but essential role in vivo by binding to the 5'-leader sequence and broadening the substrate specificity of the ribozyme. This Synechococcus sp. (strain CC9902) protein is Ribonuclease P protein component.